The sequence spans 487 residues: N-succinylglutamate 5-semialdehyde dehydrogenase (487 aa).

221 to 226 (GSSRTG) is a binding site for NAD(+). Residues E244 and C278 contribute to the active site.

Belongs to the aldehyde dehydrogenase family. AstD subfamily.

It carries out the reaction N-succinyl-L-glutamate 5-semialdehyde + NAD(+) + H2O = N-succinyl-L-glutamate + NADH + 2 H(+). Its pathway is amino-acid degradation; L-arginine degradation via AST pathway; L-glutamate and succinate from L-arginine: step 4/5. Its function is as follows. Catalyzes the NAD-dependent reduction of succinylglutamate semialdehyde into succinylglutamate. The chain is N-succinylglutamate 5-semialdehyde dehydrogenase from Pseudomonas putida (strain W619).